Consider the following 1214-residue polypeptide: Reverse gyrase (1214 aa).

The segment at 1–37 (MKAIYRDMCPNCRGAITDERLAAKNPCDACLDEPISM) adopts an RG N-terminal-type zinc-finger fold. Zn(2+) is bound by residues C9, C12, C27, and C30. Residues Q89 and 106 to 113 (APTGMGKS) contribute to the ATP site. The region spanning 93–252 (VKRIIKGKSF…WEIIKLKKQL (160 aa)) is the Helicase ATP-binding domain. The DEAD box motif lies at 213–216 (DDVD). Residues 635–1214 (DLVKSALMIV…YEEILRYVKS (580 aa)) are topoisomerase I. One can recognise a Toprim domain in the interval 639–802 (SALMIVESPN…VIKRIEFHEV (164 aa)). Residue E645 participates in Mg(2+) binding. An RG C-terminal-type zinc finger spans residues 719–748 (IKRCRDCGHQFVDWEEKGVCPRCGSRNVYD). The Zn(2+) site is built by C722, C725, C738, and C741. D771 contributes to the Mg(2+) binding site. The Topo IA-type catalytic domain maps to 818 to 1212 (NEDRVNAQLV…ELYEEILRYV (395 aa)). Catalysis depends on Y955, which acts as the O-(5'-phospho-DNA)-tyrosine intermediate.

This sequence in the N-terminal section; belongs to the DEAD box helicase family. DDVD subfamily. In the C-terminal section; belongs to the type IA topoisomerase family. Monomer. Zn(2+) serves as cofactor. Requires Mg(2+) as cofactor.

It localises to the cytoplasm. The enzyme catalyses ATP + H2O = ADP + phosphate + H(+). In terms of biological role, modifies the topological state of DNA by introducing positive supercoils in an ATP-dependent process. Increases the linking number in steps of +1. Binds to single-stranded DNA, transiently cleaves and then rejoins the ends, introducing a positive supercoil in the process. The scissile phosphodiester is attacked by the catalytic tyrosine of the enzyme, resulting in the formation of a DNA-(5'-phosphotyrosyl)-enzyme intermediate. Probably involved in rewinding DNA strands in regions of the chromosome that have opened up to allow replication, transcription, DNA repair and/or for DNA protection. The sequence is that of Reverse gyrase from Pyrococcus furiosus (strain ATCC 43587 / DSM 3638 / JCM 8422 / Vc1).